Here is a 217-residue protein sequence, read N- to C-terminus: Peroxiredoxin (217 aa).

The region spanning 2–159 (VVIGEKFPEV…VVRLVKALQT (158 aa)) is the Thioredoxin domain. The Cysteine sulfenic acid (-SOH) intermediate role is filled by Cys46. Substrate is bound at residue Arg122.

The protein belongs to the peroxiredoxin family. Prx6 subfamily. As to quaternary structure, homodecamer. Pentamer of dimers that assemble into a ring structure.

It localises to the cytoplasm. It carries out the reaction a hydroperoxide + [thioredoxin]-dithiol = an alcohol + [thioredoxin]-disulfide + H2O. Thiol-specific peroxidase that catalyzes the reduction of hydrogen peroxide and organic hydroperoxides to water and alcohols, respectively. Plays a role in cell protection against oxidative stress by detoxifying peroxides. This Methanococcus maripaludis (strain C5 / ATCC BAA-1333) protein is Peroxiredoxin.